A 346-amino-acid polypeptide reads, in one-letter code: Holliday junction branch migration complex subunit RuvB (346 aa).

A large ATPase domain (RuvB-L) region spans residues 1–182 (MSEPARLISP…FGIPVRLSFY (182 aa)). ATP is bound by residues leucine 21, arginine 22, glycine 63, lysine 66, threonine 67, threonine 68, 129-131 (EDF), arginine 172, tyrosine 182, and arginine 219. Threonine 67 contacts Mg(2+). Positions 183–253 (TVEELELIVR…IADEALTRLL (71 aa)) are small ATPAse domain (RuvB-S). The segment at 256–346 (NVGFDQLDKR…AQFRLFQEDN (91 aa)) is head domain (RuvB-H). Residues arginine 292, arginine 311, and arginine 316 each contribute to the DNA site.

It belongs to the RuvB family. As to quaternary structure, homohexamer. Forms an RuvA(8)-RuvB(12)-Holliday junction (HJ) complex. HJ DNA is sandwiched between 2 RuvA tetramers; dsDNA enters through RuvA and exits via RuvB. An RuvB hexamer assembles on each DNA strand where it exits the tetramer. Each RuvB hexamer is contacted by two RuvA subunits (via domain III) on 2 adjacent RuvB subunits; this complex drives branch migration. In the full resolvosome a probable DNA-RuvA(4)-RuvB(12)-RuvC(2) complex forms which resolves the HJ.

The protein resides in the cytoplasm. It catalyses the reaction ATP + H2O = ADP + phosphate + H(+). In terms of biological role, the RuvA-RuvB-RuvC complex processes Holliday junction (HJ) DNA during genetic recombination and DNA repair, while the RuvA-RuvB complex plays an important role in the rescue of blocked DNA replication forks via replication fork reversal (RFR). RuvA specifically binds to HJ cruciform DNA, conferring on it an open structure. The RuvB hexamer acts as an ATP-dependent pump, pulling dsDNA into and through the RuvAB complex. RuvB forms 2 homohexamers on either side of HJ DNA bound by 1 or 2 RuvA tetramers; 4 subunits per hexamer contact DNA at a time. Coordinated motions by a converter formed by DNA-disengaged RuvB subunits stimulates ATP hydrolysis and nucleotide exchange. Immobilization of the converter enables RuvB to convert the ATP-contained energy into a lever motion, pulling 2 nucleotides of DNA out of the RuvA tetramer per ATP hydrolyzed, thus driving DNA branch migration. The RuvB motors rotate together with the DNA substrate, which together with the progressing nucleotide cycle form the mechanistic basis for DNA recombination by continuous HJ branch migration. Branch migration allows RuvC to scan DNA until it finds its consensus sequence, where it cleaves and resolves cruciform DNA. This chain is Holliday junction branch migration complex subunit RuvB, found in Rhizobium leguminosarum bv. trifolii (strain WSM2304).